Reading from the N-terminus, the 317-residue chain is Large ribosomal subunit protein uL10 (317 aa).

The segment covering 280–290 (SASAAPAAGGA) has biased composition (low complexity). The segment at 280–317 (SASAAPAAGGATEKKEEAKKPESESEEEDDDMGFGLFD) is disordered. Positions 291-302 (TEKKEEAKKPES) are enriched in basic and acidic residues. Phosphoserine is present on Ser302. Ser304 carries the phosphoserine; by CK1 modification.

It belongs to the universal ribosomal protein uL10 family. P0 forms a pentameric complex by interaction with dimers of P1 and P2.

The protein localises to the cytoplasm. Its subcellular location is the nucleus. Functionally, ribosomal protein P0 is the functional equivalent of E.coli protein L10. The chain is Large ribosomal subunit protein uL10 (RpLP0) from Drosophila melanogaster (Fruit fly).